A 474-amino-acid chain; its full sequence is E3 ubiquitin-protein ligase RNF14 (474 aa).

One can recognise an RWD domain in the interval 11–137 (DELLALASIY…QFLKEETLAY (127 aa)). Residues 37–45 (RIYLDLPQN) carry the D-box motif. The TRIAD supradomain stretch occupies residues 216–457 (KLFLCSICFC…DPGSPCFNRL (242 aa)). Zn(2+) contacts are provided by Cys220, Cys223, Cys238, His240, Cys243, Cys246, Cys265, Cys270, Cys309, Cys314, Cys329, Cys332, Cys337, Cys340, and His345. The RING-type 1 zinc-finger motif lies at 220 to 270 (CSICFCEKLGSECMYFLECRHVYCKACLKDYFEIQIRDGQVQCLNCPEPKC). The segment at 289–350 (ARYDRLLLQS…RLTYHGVSPC (62 aa)) adopts an IBR-type zinc-finger fold. Phosphoserine is present on Ser348. Position 350 (Cys350) interacts with Zn(2+). The stretch at 351–395 (KVTAEKLMDLRNEYLQADEANKRLLDQRYGKRVIQKALEEMESKE) forms a coiled coil. Residues 361–474 (RNEYLQADEA…DDIWEDEVED (114 aa)) are interaction with androgen receptor. The Zn(2+) site is built by Cys404 and Cys407. An RING-type 2; atypical zinc finger spans residues 404–433 (CPCCGTPIEKLDGCNKMTCTGCMQYFCWIC). Cys417 is an active-site residue. Residues Cys422, Cys425, Cys430, Cys433, His445, and Cys453 each coordinate Zn(2+).

The protein belongs to the RBR family. RNF14 subfamily. Interacts with GCN1; interaction takes place in response to ribosome collisions and is required for ubiquitination of EEF1A1/eEF1A. Interacts with the ubiquitin-conjugating enzymes UBE2E1 and UBE2E2. Interacts with AR/androgen receptor. Interacts with TCF7/TCF1, TCF7L1/TCF3 and TCF7L2/TCF4; promoting Wnt signaling. In terms of processing, RING-type zinc finger-dependent and UBE2E2-dependent autoubiquitination. Widely expressed.

The protein localises to the cytoplasm. The protein resides in the nucleus. It carries out the reaction [E2 ubiquitin-conjugating enzyme]-S-ubiquitinyl-L-cysteine + [acceptor protein]-L-lysine = [E2 ubiquitin-conjugating enzyme]-L-cysteine + [acceptor protein]-N(6)-ubiquitinyl-L-lysine.. It participates in protein modification; protein ubiquitination. Its function is as follows. E3 ubiquitin-protein ligase that plays a key role in the RNF14-RNF25 translation quality control pathway, a pathway that takes place when a ribosome has stalled during translation, and which promotes ubiquitination and degradation of translation factors on stalled ribosomes. Recruited to stalled ribosomes by the ribosome collision sensor GCN1 and mediates 'Lys-6'-linked ubiquitination of target proteins, leading to their degradation. Mediates ubiquitination of EEF1A1/eEF1A and ETF1/eRF1 translation factors on stalled ribosomes, leading to their degradation. Also catalyzes ubiquitination of ribosomal proteins RPL0, RPL1, RPL12, RPS13 and RPS17. Specifically required to resolve RNA-protein cross-links caused by reactive aldehydes, which trigger translation stress by stalling ribosomes: acts by catalying 'Lys-6'-linked ubiquitination of RNA-protein cross-links, leading to their removal by the ATP-dependent unfoldase VCP and subsequent degradation by the proteasome. Independently of its function in the response to stalled ribosomes, acts as a regulator of transcription in Wnt signaling via its interaction with TCF transcription factors (TCF7/TCF1, TCF7L1/TCF3 and TCF7L2/TCF4). May also play a role as a coactivator for androgen- and, to a lesser extent, progesterone-dependent transcription. The protein is E3 ubiquitin-protein ligase RNF14 of Homo sapiens (Human).